A 312-amino-acid chain; its full sequence is Methionyl-tRNA formyltransferase (312 aa).

109-112 (SLLP) serves as a coordination point for (6S)-5,6,7,8-tetrahydrofolate.

Belongs to the Fmt family.

The catalysed reaction is L-methionyl-tRNA(fMet) + (6R)-10-formyltetrahydrofolate = N-formyl-L-methionyl-tRNA(fMet) + (6S)-5,6,7,8-tetrahydrofolate + H(+). Attaches a formyl group to the free amino group of methionyl-tRNA(fMet). The formyl group appears to play a dual role in the initiator identity of N-formylmethionyl-tRNA by promoting its recognition by IF2 and preventing the misappropriation of this tRNA by the elongation apparatus. This is Methionyl-tRNA formyltransferase from Anaeromyxobacter dehalogenans (strain 2CP-C).